Reading from the N-terminus, the 421-residue chain is D-amino acid dehydrogenase (421 aa).

Position 3-17 (3-17 (VIVLGSGVIGVASAY)) interacts with FAD.

The protein belongs to the DadA oxidoreductase family. The cofactor is FAD.

It catalyses the reaction a D-alpha-amino acid + A + H2O = a 2-oxocarboxylate + AH2 + NH4(+). Its pathway is amino-acid degradation; D-alanine degradation; NH(3) and pyruvate from D-alanine: step 1/1. Its function is as follows. Oxidative deamination of D-amino acids. This chain is D-amino acid dehydrogenase, found in Acinetobacter baumannii (strain ATCC 17978 / DSM 105126 / CIP 53.77 / LMG 1025 / NCDC KC755 / 5377).